Reading from the N-terminus, the 908-residue chain is Adhesion G-protein coupled receptor F1 (908 aa).

Positions methionine 1–glycine 20 are cleaved as a signal peptide. Topologically, residues phenylalanine 21 to tyrosine 588 are extracellular. Residues asparagine 133, asparagine 167, asparagine 328, asparagine 353, asparagine 367, asparagine 388, asparagine 422, asparagine 453, asparagine 510, asparagine 519, asparagine 526, and asparagine 551 are each glycosylated (N-linked (GlcNAc...) asparagine). An SEA domain is found at glutamate 147–proline 255. A GAIN-B domain is found at proline 434–serine 577. Disulfide bonds link cysteine 532–cysteine 559 and cysteine 547–cysteine 561. The segment at cysteine 532–serine 577 is GPS. Residues serine 566–phenylalanine 574 form a stachel region. The chain crosses the membrane as a helical span at residues isoleucine 589–tryptophan 609. The Cytoplasmic segment spans residues lysine 610–asparagine 622. A helical membrane pass occupies residues isoleucine 623 to alanine 643. Over threonine 644–alanine 658 the chain is Extracellular. Cysteine 655 and cysteine 731 are joined by a disulfide. A helical transmembrane segment spans residues valine 659–leucine 679. Residues leucine 680–methionine 697 are Cytoplasmic-facing. The helical transmembrane segment at alanine 698–valine 718 threads the bilayer. Residues threonine 719–leucine 742 lie on the Extracellular side of the membrane. Residue asparagine 734 is glycosylated (N-linked (GlcNAc...) asparagine). Residues leucine 743–valine 763 traverse the membrane as a helical segment. Residues leucine 764 to lysine 789 are Cytoplasmic-facing. A helical membrane pass occupies residues serine 790–alanine 810. The Extracellular portion of the chain corresponds to asparagine 811–histidine 818. Residues valine 819–leucine 839 traverse the membrane as a helical segment. Topologically, residues aspartate 840 to glutamate 908 are cytoplasmic.

Belongs to the G-protein coupled receptor 2 family. Adhesion G-protein coupled receptor (ADGR) subfamily. In terms of assembly, heterodimer of 2 chains generated by proteolytic processing; the large extracellular N-terminal fragment and the membrane-bound C-terminal fragment predominantly remain associated and non-covalently linked. In terms of processing, autoproteolytically processed at the GPS region of the GAIN-B domain; this cleavage modulates receptor activity. In terms of tissue distribution, expressed in liver, kidney and adrenal gland. In kidney strong expression in the renal pelvis and the ureter.

It is found in the cell membrane. Forms a heterodimer of 2 chains generated by proteolytic processing that remain associated through non-covalent interactions mediated by the GAIN-B domain. In the inactivated receptor, the Stachel sequence (also named stalk) is embedded in the GAIN-B domain, where it adopts a beta-strand conformation. On activation, the Stachel moves into the 7 transmembrane region and adopts a twisted hook-shaped configuration that forms contacts within the receptor, leading to coupling of a G-alpha protein, which activates signaling. The cleaved GAIN-B and N-terminal domains can then dissociate from the rest of the receptor. Its function is as follows. Adhesion G-protein coupled receptor (aGPCR) for N-docosahexaenoylethanolamine (synaptamide), an omega-3 fatty acid lipid highly enriched in the brain. Ligand binding causes a conformation change that triggers signaling via guanine nucleotide-binding proteins (G proteins) and modulates the activity of downstream effectors, such as adenylate cyclase. ADGRF1 is coupled to G(s) G proteins and mediates activation of adenylate cyclase activity. Also able to couple to G(q), G(i) and G(12)/G(13) G proteins; additional evidence is however required to confirm this result in vivo. Involved in the development of neurons and cognitive function. In liver, involved in fat accumulation. In Mus musculus (Mouse), this protein is Adhesion G-protein coupled receptor F1.